The chain runs to 249 residues: MYKVVLIRHGESVWNKENKFTGWSDVDLSEKGNEEALKAGKQLKKDGFTFDLAYTSVLKRAIKTLWNVLNTMDLLWTPVVKDWRLNERHYGALQGLNKAETAAKYGEEQVKIWRRSYDIAPMALDENDERYPGKEARYSGLLKGEIPLAECLKDTVARVVPYWGKEVVPQIKAGKKIIIAAHGNSLRALVKYLDNISDSNIVNLNIPTAMPLVYELDENLKAVKNYYLGDPEAVKKAMETVASQGKVKK.

Residues 8 to 15, 21 to 22, Arg60, 87 to 90, Lys98, 114 to 115, and 183 to 184 contribute to the substrate site; these read RHGESVWN, TG, ERHY, RR, and GN. His9 (tele-phosphohistidine intermediate) is an active-site residue. The active-site Proton donor/acceptor is the Glu87.

Belongs to the phosphoglycerate mutase family. BPG-dependent PGAM subfamily.

It catalyses the reaction (2R)-2-phosphoglycerate = (2R)-3-phosphoglycerate. It functions in the pathway carbohydrate degradation; glycolysis; pyruvate from D-glyceraldehyde 3-phosphate: step 3/5. Functionally, catalyzes the interconversion of 2-phosphoglycerate and 3-phosphoglycerate. The polypeptide is 2,3-bisphosphoglycerate-dependent phosphoglycerate mutase (Endomicrobium trichonymphae).